Reading from the N-terminus, the 128-residue chain is Fluoride-specific ion channel FluC (128 aa).

Transmembrane regions (helical) follow at residues 3–23, 34–54, 69–89, and 100–120; these read FSVIFAVGIGGFFGAISRFLI, LFPVGTLTVNVLGSFIIGFLY, FITGFLGALTTFSTFSLETLL, and FLNILLNVILTISSTFAAIIL. Na(+) is bound by residues glycine 75 and threonine 78.

It belongs to the fluoride channel Fluc/FEX (TC 1.A.43) family.

The protein localises to the cell inner membrane. The enzyme catalyses fluoride(in) = fluoride(out). Its activity is regulated as follows. Na(+) is not transported, but it plays an essential structural role and its presence is essential for fluoride channel function. Functionally, fluoride-specific ion channel. Important for reducing fluoride concentration in the cell, thus reducing its toxicity. This chain is Fluoride-specific ion channel FluC, found in Nitratiruptor sp. (strain SB155-2).